Here is a 679-residue protein sequence, read N- to C-terminus: Glycine--tRNA ligase beta subunit (679 aa).

The protein belongs to the class-II aminoacyl-tRNA synthetase family. As to quaternary structure, tetramer of two alpha and two beta subunits.

The protein localises to the cytoplasm. It carries out the reaction tRNA(Gly) + glycine + ATP = glycyl-tRNA(Gly) + AMP + diphosphate. The chain is Glycine--tRNA ligase beta subunit from Streptococcus pyogenes serotype M12 (strain MGAS9429).